The sequence spans 627 residues: 1-deoxy-D-xylulose-5-phosphate synthase (627 aa).

Thiamine diphosphate is bound by residues histidine 72 and 113–115 (GHS). Aspartate 144 is a binding site for Mg(2+). Thiamine diphosphate contacts are provided by residues 145–146 (GA), asparagine 173, tyrosine 283, and glutamate 366. Asparagine 173 provides a ligand contact to Mg(2+).

It belongs to the transketolase family. DXPS subfamily. In terms of assembly, homodimer. It depends on Mg(2+) as a cofactor. The cofactor is thiamine diphosphate.

The catalysed reaction is D-glyceraldehyde 3-phosphate + pyruvate + H(+) = 1-deoxy-D-xylulose 5-phosphate + CO2. The protein operates within metabolic intermediate biosynthesis; 1-deoxy-D-xylulose 5-phosphate biosynthesis; 1-deoxy-D-xylulose 5-phosphate from D-glyceraldehyde 3-phosphate and pyruvate: step 1/1. Catalyzes the acyloin condensation reaction between C atoms 2 and 3 of pyruvate and glyceraldehyde 3-phosphate to yield 1-deoxy-D-xylulose-5-phosphate (DXP). This Macrococcus caseolyticus (strain JCSC5402) (Macrococcoides caseolyticum) protein is 1-deoxy-D-xylulose-5-phosphate synthase.